The primary structure comprises 139 residues: Diuretic hormone 41 (139 aa).

An N-terminal signal peptide occupies residues 1–20 (MMWWALWCAVVVAAGSGVAA). The propeptide occupies 21-79 (APAPDSLSPLDMVQMDSSAPDDETLYAMSPMAARYSAGAPWLYLLADMPRDSQTGSGRV). Position 122 is an isoleucine amide (isoleucine 122).

It belongs to the sauvagine/corticotropin-releasing factor/urotensin I family. Expressed in corpora cardiaca (CC), corpora allata (CA), antennal lobe (AL) and gnathal ganglion (GNG) (at protein level). Expression in CC and CA detected in all animals, in GNG in most animals, expression in AL detected in few animals (at protein level).

The protein resides in the secreted. Its function is as follows. Regulation of fluid secretion. The polypeptide is Diuretic hormone 41 (Agrotis ipsilon (Black cutworm moth)).